A 220-amino-acid chain; its full sequence is Probable GTP-binding protein EngB (220 aa).

Residues proline 24–proline 207 enclose the EngB-type G domain. GTP-binding positions include glycine 32–serine 39, glycine 59–histidine 63, aspartate 81–glycine 84, threonine 148–aspartate 151, and leucine 185–alanine 188. Serine 39 and threonine 61 together coordinate Mg(2+).

Belongs to the TRAFAC class TrmE-Era-EngA-EngB-Septin-like GTPase superfamily. EngB GTPase family. Requires Mg(2+) as cofactor.

Its function is as follows. Necessary for normal cell division and for the maintenance of normal septation. The sequence is that of Probable GTP-binding protein EngB from Paraburkholderia phymatum (strain DSM 17167 / CIP 108236 / LMG 21445 / STM815) (Burkholderia phymatum).